Reading from the N-terminus, the 266-residue chain is 4-hydroxy-tetrahydrodipicolinate reductase (266 aa).

10-15 contributes to the NAD(+) binding site; that stretch reads GPRGRM. K38 contacts NADP(+). NAD(+)-binding positions include 99–101 and 125–128; these read GTT and APNF. Catalysis depends on H155, which acts as the Proton donor/acceptor. H156 provides a ligand contact to (S)-2,3,4,5-tetrahydrodipicolinate. The active-site Proton donor is the K159. 165 to 166 provides a ligand contact to (S)-2,3,4,5-tetrahydrodipicolinate; sequence GT.

The protein belongs to the DapB family.

The protein resides in the cytoplasm. It catalyses the reaction (S)-2,3,4,5-tetrahydrodipicolinate + NAD(+) + H2O = (2S,4S)-4-hydroxy-2,3,4,5-tetrahydrodipicolinate + NADH + H(+). The catalysed reaction is (S)-2,3,4,5-tetrahydrodipicolinate + NADP(+) + H2O = (2S,4S)-4-hydroxy-2,3,4,5-tetrahydrodipicolinate + NADPH + H(+). The protein operates within amino-acid biosynthesis; L-lysine biosynthesis via DAP pathway; (S)-tetrahydrodipicolinate from L-aspartate: step 4/4. In terms of biological role, catalyzes the conversion of 4-hydroxy-tetrahydrodipicolinate (HTPA) to tetrahydrodipicolinate. The protein is 4-hydroxy-tetrahydrodipicolinate reductase of Bacillus cytotoxicus (strain DSM 22905 / CIP 110041 / 391-98 / NVH 391-98).